A 347-amino-acid chain; its full sequence is Fc receptor-like A (347 aa).

Positions 1-27 (MKLSCMLIEWALYVCPAVLLATQMSLA) are cleaved as a signal peptide. 2 consecutive Ig-like C2-type domains span residues 77–166 (PFHL…ETAS) and 179–257 (PVLK…RQIS). 2 disulfide bridges follow: cysteine 106-cysteine 150 and cysteine 199-cysteine 247. The disordered stretch occupies residues 272–296 (KPATPETPPPAKAPGPLPLLPTPSD). Positions 276–292 (PETPPPAKAPGPLPLLP) are enriched in pro residues.

In terms of assembly, monomer or homodimer; disulfide-linked.

The protein localises to the cytoplasm. May be implicated in B-cell differentiation and lymphomagenesis. The protein is Fc receptor-like A (Fcrla) of Rattus norvegicus (Rat).